The chain runs to 177 residues: ATP-dependent protease subunit HslV (177 aa).

T7 is a catalytic residue. 3 residues coordinate Na(+): A162, C165, and T168.

Belongs to the peptidase T1B family. HslV subfamily. In terms of assembly, a double ring-shaped homohexamer of HslV is capped on each side by a ring-shaped HslU homohexamer. The assembly of the HslU/HslV complex is dependent on binding of ATP.

Its subcellular location is the cytoplasm. It catalyses the reaction ATP-dependent cleavage of peptide bonds with broad specificity.. With respect to regulation, allosterically activated by HslU binding. Its function is as follows. Protease subunit of a proteasome-like degradation complex believed to be a general protein degrading machinery. The polypeptide is ATP-dependent protease subunit HslV (Leptospira biflexa serovar Patoc (strain Patoc 1 / Ames)).